Consider the following 427-residue polypeptide: 3-phosphoshikimate 1-carboxyvinyltransferase (427 aa).

3-phosphoshikimate is bound by residues Lys-22, Ser-23, and Arg-27. A phosphoenolpyruvate-binding site is contributed by Lys-22. Positions 96 and 124 each coordinate phosphoenolpyruvate. 3-phosphoshikimate-binding residues include Ser-169, Ser-170, Gln-171, Ser-197, Asp-313, Asn-336, and Lys-340. Gln-171 lines the phosphoenolpyruvate pocket. The active-site Proton acceptor is the Asp-313. 3 residues coordinate phosphoenolpyruvate: Arg-344, Arg-386, and Lys-411.

Belongs to the EPSP synthase family. Monomer.

It localises to the cytoplasm. The catalysed reaction is 3-phosphoshikimate + phosphoenolpyruvate = 5-O-(1-carboxyvinyl)-3-phosphoshikimate + phosphate. It functions in the pathway metabolic intermediate biosynthesis; chorismate biosynthesis; chorismate from D-erythrose 4-phosphate and phosphoenolpyruvate: step 6/7. Catalyzes the transfer of the enolpyruvyl moiety of phosphoenolpyruvate (PEP) to the 5-hydroxyl of shikimate-3-phosphate (S3P) to produce enolpyruvyl shikimate-3-phosphate and inorganic phosphate. The protein is 3-phosphoshikimate 1-carboxyvinyltransferase of Salmonella choleraesuis (strain SC-B67).